Reading from the N-terminus, the 1439-residue chain is ABC transporter G family member 14 (1439 aa).

The span at 1-17 shows a compositional bias: basic and acidic residues; the sequence is MEENSNKFEQELKEIGQ. Residues 1-21 are disordered; sequence MEENSNKFEQELKEIGQDRNQ. The ABC transporter 1 domain occupies 117–370; it reads FSILNFFKPS…FMSLGFDCEP (254 aa). Residues 475 to 700 form the ABC transmembrane type-2 1 domain; it reads LNDKFGLFTK…GSEFDAYRIC (226 aa). The next 6 helical transmembrane spans lie at 479–499, 516–536, 564–584, 589–609, 614–634, and 734–754; these read FGLFTKYLSVLIQAFVYSSVF, ILSAVIFNAFLSVGEMSMTFI, IPFTLLQVFLFSIIAYFMFGL, GKFFIFSFTLVGASLACTALF, YLCPSMYIAQNISNVFIIFML, and IIVYCWWIFFVICNMLAMEYI. Residues 805–1049 form the ABC transporter 2 domain; sequence FTWQNIRYTV…LTSYFERHGV (245 aa). 841 to 848 lines the ATP pocket; the sequence is GSSGAGKT. The 226-residue stretch at 1141–1366 folds into the ABC transmembrane type-2 2 domain; it reads YYTYGSFVQS…YNTCQNYTSA (226 aa). Transmembrane regions (helical) follow at residues 1144 to 1164, 1175 to 1195, 1217 to 1237, 1256 to 1276, 1283 to 1303, and 1413 to 1433; these read YGSFVQSALCGLIIGFTFWNL, IFFIFEALMLGILLIFVVMPQ, FAISIVVVELPFIVISGTIFF, FYFWFIFVIFLFFCVSFGQAV, MFFAMTLIPLLIVFLFLFSGV, and VGIIICFFVFNILMVILFVYL.

Belongs to the ABC transporter superfamily. ABCG family. PDR (TC 3.A.1.205) subfamily.

The protein resides in the membrane. In Dictyostelium discoideum (Social amoeba), this protein is ABC transporter G family member 14 (abcG14).